Consider the following 251-residue polypeptide: NADH-quinone oxidoreductase subunit C (251 aa).

The disordered stretch occupies residues 1 to 34 (MSDANNTAGDANEVNPEKDLSAENLPGQRGQGGE).

The protein belongs to the complex I 30 kDa subunit family. As to quaternary structure, NDH-1 is composed of 14 different subunits. Subunits NuoB, C, D, E, F, and G constitute the peripheral sector of the complex.

It localises to the cell membrane. The enzyme catalyses a quinone + NADH + 5 H(+)(in) = a quinol + NAD(+) + 4 H(+)(out). Its function is as follows. NDH-1 shuttles electrons from NADH, via FMN and iron-sulfur (Fe-S) centers, to quinones in the respiratory chain. The immediate electron acceptor for the enzyme in this species is believed to be a menaquinone. Couples the redox reaction to proton translocation (for every two electrons transferred, four hydrogen ions are translocated across the cytoplasmic membrane), and thus conserves the redox energy in a proton gradient. The sequence is that of NADH-quinone oxidoreductase subunit C from Streptomyces coelicolor (strain ATCC BAA-471 / A3(2) / M145).